Reading from the N-terminus, the 642-residue chain is Threonine--tRNA ligase (642 aa).

In terms of domain architecture, TGS spans 1–61; that stretch reads MPVITLPDGS…ENDAQLSIIT (61 aa). The interval 243-534 is catalytic; sequence DHRKIGKQLD…LTEEFAGFFP (292 aa). Lys286 carries the N6-acetyllysine modification. Zn(2+) is bound by residues Cys334, His385, and His511.

This sequence belongs to the class-II aminoacyl-tRNA synthetase family. Homodimer. Zn(2+) serves as cofactor.

The protein localises to the cytoplasm. It catalyses the reaction tRNA(Thr) + L-threonine + ATP = L-threonyl-tRNA(Thr) + AMP + diphosphate + H(+). Functionally, catalyzes the attachment of threonine to tRNA(Thr) in a two-step reaction: L-threonine is first activated by ATP to form Thr-AMP and then transferred to the acceptor end of tRNA(Thr). Also edits incorrectly charged L-seryl-tRNA(Thr). In Escherichia coli O9:H4 (strain HS), this protein is Threonine--tRNA ligase.